The sequence spans 410 residues: F-box protein At3g19890 (410 aa).

Residues Thr-2–Lys-49 enclose the F-box domain. The disordered stretch occupies residues Glu-386–Arg-410. Positions Asp-387 to Lys-398 are enriched in basic and acidic residues. Basic residues predominate over residues Arg-399 to Arg-410.

The sequence is that of F-box protein At3g19890 from Arabidopsis thaliana (Mouse-ear cress).